The following is a 189-amino-acid chain: Frataxin-like protein, mitochondrial (189 aa).

The transit peptide at 1–50 (MNCARLHQRIPLRAMALTTTSYPALAPSHSFANASTSVMTASAMAVAHRA) directs the protein to the mitochondrion.

It belongs to the frataxin family. In terms of assembly, interacts with IscU; the interaction is direct.

The protein localises to the mitochondrion. It carries out the reaction 4 Fe(2+) + O2 + 4 H(+) = 4 Fe(3+) + 2 H2O. Functionally, iron-binding protein which binds 2 iron atoms per monomer. Probably, acts as an iron carrier for the biosynthesis of Fe-S clusters. Stimulates the cysteine desulphurase activity of IscS in the presence of IscU. The chain is Frataxin-like protein, mitochondrial from Leishmania donovani.